A 128-amino-acid chain; its full sequence is Glycine cleavage system H protein (128 aa).

The 83-residue stretch at 25 to 107 folds into the Lipoyl-binding domain; sequence TITVGITHHA…YGAGWFFKLK (83 aa). Lys66 is subject to N6-lipoyllysine.

Belongs to the GcvH family. The glycine cleavage system is composed of four proteins: P, T, L and H. Requires (R)-lipoate as cofactor.

Functionally, the glycine cleavage system catalyzes the degradation of glycine. The H protein shuttles the methylamine group of glycine from the P protein to the T protein. This is Glycine cleavage system H protein from Neisseria meningitidis serogroup B (strain ATCC BAA-335 / MC58).